Reading from the N-terminus, the 197-residue chain is dITP/XTP pyrophosphatase (197 aa).

9-14 (TNNLNK) serves as a coordination point for substrate. Residues Glu-42 and Asp-71 each contribute to the Mg(2+) site. The active-site Proton acceptor is the Asp-71. Substrate is bound by residues Ser-72, 153 to 156 (FGYD), Lys-176, and 181 to 182 (HR).

The protein belongs to the HAM1 NTPase family. Homodimer. It depends on Mg(2+) as a cofactor.

The enzyme catalyses XTP + H2O = XMP + diphosphate + H(+). It catalyses the reaction dITP + H2O = dIMP + diphosphate + H(+). It carries out the reaction ITP + H2O = IMP + diphosphate + H(+). Functionally, pyrophosphatase that catalyzes the hydrolysis of nucleoside triphosphates to their monophosphate derivatives, with a high preference for the non-canonical purine nucleotides XTP (xanthosine triphosphate), dITP (deoxyinosine triphosphate) and ITP. Seems to function as a house-cleaning enzyme that removes non-canonical purine nucleotides from the nucleotide pool, thus preventing their incorporation into DNA/RNA and avoiding chromosomal lesions. The chain is dITP/XTP pyrophosphatase from Leptospira interrogans serogroup Icterohaemorrhagiae serovar copenhageni (strain Fiocruz L1-130).